Reading from the N-terminus, the 120-residue chain is UPF0102 protein TW312 (120 aa).

This sequence belongs to the UPF0102 family.

This Tropheryma whipplei (strain TW08/27) (Whipple's bacillus) protein is UPF0102 protein TW312.